Reading from the N-terminus, the 401-residue chain is Phosphoglycerate kinase (401 aa).

Substrate is bound by residues 26 to 28 (DFN), arginine 41, 64 to 67 (HLGK), arginine 125, and arginine 158. ATP is bound by residues lysine 209, glycine 300, glutamate 331, and 357–360 (GGDS).

Belongs to the phosphoglycerate kinase family. As to quaternary structure, monomer.

The protein resides in the cytoplasm. It catalyses the reaction (2R)-3-phosphoglycerate + ATP = (2R)-3-phospho-glyceroyl phosphate + ADP. It participates in carbohydrate degradation; glycolysis; pyruvate from D-glyceraldehyde 3-phosphate: step 2/5. The polypeptide is Phosphoglycerate kinase (Clostridium tetani (strain Massachusetts / E88)).